Here is a 290-residue protein sequence, read N- to C-terminus: Programmed cell death 1 ligand 1 (290 aa).

A signal peptide spans 1–18; that stretch reads MRIFAVFIFMTYWHLLNA. In terms of domain architecture, Ig-like V-type spans 19-127; sequence FTVTVPKDLY…YGGADYKRIT (109 aa). The Extracellular portion of the chain corresponds to 19–238; the sequence is FTVTVPKDLY…LPLAHPPNER (220 aa). A glycan (N-linked (GlcNAc...) asparagine) is linked at asparagine 35. 2 disulfides stabilise this stretch: cysteine 40/cysteine 114 and cysteine 155/cysteine 209. One can recognise an Ig-like C2-type domain in the interval 133-225; that stretch reads PYNKINQRIL…PEENHTAELV (93 aa). 3 N-linked (GlcNAc...) asparagine glycosylation sites follow: asparagine 192, asparagine 200, and asparagine 219. A helical transmembrane segment spans residues 239–259; it reads THLVILGAILLCLGVALTFIF. Residues 260-290 lie on the Cytoplasmic side of the membrane; the sequence is RLRKGRMMDVKKCGIQDTNSKKQSDTHLEET.

Belongs to the immunoglobulin superfamily. BTN/MOG family. In terms of assembly, interacts with PDCD1. Interacts (via transmembrane domain) with CMTM4 and CMTM6. Interacts with (phosphorylated) STAT3; promoting nuclear translocation. Interacts with CD80. As to quaternary structure, may form homomultimers. Ubiquitinated; STUB1 likely mediates polyubiquitination of PD-L1/CD274 triggering its degradation. Ubiquitinated by MARCHF8; leading to degradation. Deubiquitinated by USP22; leading to stabilization. In terms of tissue distribution, highly expressed in the heart, skeletal muscle, placenta and lung. Weakly expressed in the thymus, spleen, kidney and liver. Expressed on activated T- and B-cells, dendritic cells, keratinocytes and monocytes. As to expression, widely expressed, highest in lung, liver and pituitary and in various peripheral blood cells, including neutrophils and some subtypes of lymphoid and myeloid cells.

The protein localises to the cell membrane. It localises to the early endosome membrane. It is found in the recycling endosome membrane. The protein resides in the nucleus. Its subcellular location is the endomembrane system. The protein localises to the secreted. Its function is as follows. Plays a critical role in induction and maintenance of immune tolerance to self. As a ligand for the inhibitory receptor PDCD1/PD-1, modulates the activation threshold of T-cells and limits T-cell effector response. Through a yet unknown activating receptor, may costimulate T-cell subsets that predominantly produce interleukin-10 (IL10). Can also act as a transcription coactivator: in response to hypoxia, translocates into the nucleus via its interaction with phosphorylated STAT3 and promotes transcription of GSDMC, leading to pyroptosis. Functionally, the PDCD1-mediated inhibitory pathway is exploited by tumors to attenuate anti-tumor immunity and escape destruction by the immune system, thereby facilitating tumor survival. The interaction with PDCD1/PD-1 inhibits cytotoxic T lymphocytes (CTLs) effector function. The blockage of the PDCD1-mediated pathway results in the reversal of the exhausted T-cell phenotype and the normalization of the anti-tumor response, providing a rationale for cancer immunotherapy. The sequence is that of Programmed cell death 1 ligand 1 from Homo sapiens (Human).